The chain runs to 162 residues: Transcription elongation factor GreA (162 aa).

The stretch at 45-65 (NAEYHAAKERQLFIEARINEL) forms a coiled coil.

This sequence belongs to the GreA/GreB family.

In terms of biological role, necessary for efficient RNA polymerase transcription elongation past template-encoded arresting sites. The arresting sites in DNA have the property of trapping a certain fraction of elongating RNA polymerases that pass through, resulting in locked ternary complexes. Cleavage of the nascent transcript by cleavage factors such as GreA or GreB allows the resumption of elongation from the new 3'terminus. GreA releases sequences of 2 to 3 nucleotides. This Wolinella succinogenes (strain ATCC 29543 / DSM 1740 / CCUG 13145 / JCM 31913 / LMG 7466 / NCTC 11488 / FDC 602W) (Vibrio succinogenes) protein is Transcription elongation factor GreA.